The primary structure comprises 194 residues: Fe/S biogenesis protein NfuA (194 aa).

Residues Cys151 and Cys154 each coordinate [4Fe-4S] cluster.

This sequence belongs to the NfuA family. As to quaternary structure, homodimer. It depends on [4Fe-4S] cluster as a cofactor.

Functionally, involved in iron-sulfur cluster biogenesis. Binds a 4Fe-4S cluster, can transfer this cluster to apoproteins, and thereby intervenes in the maturation of Fe/S proteins. Could also act as a scaffold/chaperone for damaged Fe/S proteins. The protein is Fe/S biogenesis protein NfuA of Pasteurella multocida (strain Pm70).